A 436-amino-acid chain; its full sequence is Homeobox protein PKNOX1 (436 aa).

The segment at 24–49 (LKTEQDPNCSEPDVEGVSPPPVGSQT) is disordered. Phosphoserine is present on residues Ser33 and Ser41. The MEIS N-terminal domain occupies 80–163 (GSEGTTSASF…MNSETLLSGE (84 aa)). The segment at residues 259–321 (SKNKRGVLPK…NARRRILQPM (63 aa)) is a DNA-binding region (homeobox; TALE-type). A disordered region spans residues 401 to 436 (AEQSEDDSVDSTGDGGAALAPGHLGGLVLENSDSLQ).

This sequence belongs to the TALE/MEIS homeobox family. Interacts with MN1.

The protein localises to the nucleus. In terms of biological role, activates transcription in the presence of PBX1A and HOXA1. The protein is Homeobox protein PKNOX1 of Bos taurus (Bovine).